The sequence spans 156 residues: Ribosomal RNA large subunit methyltransferase H (156 aa).

Residues Leu-73, Gly-104, and 123–128 each bind S-adenosyl-L-methionine; that span reads LSSLTL.

Belongs to the RNA methyltransferase RlmH family. Homodimer.

Its subcellular location is the cytoplasm. It catalyses the reaction pseudouridine(1915) in 23S rRNA + S-adenosyl-L-methionine = N(3)-methylpseudouridine(1915) in 23S rRNA + S-adenosyl-L-homocysteine + H(+). Its function is as follows. Specifically methylates the pseudouridine at position 1915 (m3Psi1915) in 23S rRNA. This is Ribosomal RNA large subunit methyltransferase H from Bordetella avium (strain 197N).